The primary structure comprises 324 residues: Beta-ketoacyl-[acyl-carrier-protein] synthase III (324 aa).

Catalysis depends on residues Cys114 and His246. Residues Gln247–Arg251 form an ACP-binding region. Residue Asn276 is part of the active site.

The protein belongs to the thiolase-like superfamily. FabH family. In terms of assembly, homodimer.

It is found in the cytoplasm. The enzyme catalyses malonyl-[ACP] + acetyl-CoA + H(+) = 3-oxobutanoyl-[ACP] + CO2 + CoA. The protein operates within lipid metabolism; fatty acid biosynthesis. Its function is as follows. Catalyzes the condensation reaction of fatty acid synthesis by the addition to an acyl acceptor of two carbons from malonyl-ACP. Catalyzes the first condensation reaction which initiates fatty acid synthesis and may therefore play a role in governing the total rate of fatty acid production. Possesses both acetoacetyl-ACP synthase and acetyl transacylase activities. Its substrate specificity determines the biosynthesis of branched-chain and/or straight-chain of fatty acids. This chain is Beta-ketoacyl-[acyl-carrier-protein] synthase III, found in Campylobacter jejuni (strain RM1221).